A 178-amino-acid polypeptide reads, in one-letter code: ATP-dependent protease subunit HslV (178 aa).

The active site involves Thr-5. 3 residues coordinate Na(+): Ala-160, Cys-163, and Thr-166.

This sequence belongs to the peptidase T1B family. HslV subfamily. A double ring-shaped homohexamer of HslV is capped on each side by a ring-shaped HslU homohexamer. The assembly of the HslU/HslV complex is dependent on binding of ATP.

It is found in the cytoplasm. It carries out the reaction ATP-dependent cleavage of peptide bonds with broad specificity.. With respect to regulation, allosterically activated by HslU binding. Protease subunit of a proteasome-like degradation complex believed to be a general protein degrading machinery. This is ATP-dependent protease subunit HslV from Magnetococcus marinus (strain ATCC BAA-1437 / JCM 17883 / MC-1).